The following is a 293-amino-acid chain: Proximal tail tube connector protein (293 aa).

The interval 104–240 (TRLNTTGNKK…NANTTTNDKL (137 aa)) is disordered. Basic and acidic residues-rich tracts occupy residues 112–123 (KKNDTERNDNRD), 130–140 (ADGKSNTKTSD), and 162–173 (NFNRKIDSDQPD). Positions 174–184 (SRLNLTTNDGQ) are enriched in polar residues. Residues 196–238 (NNTNNKRNTTGTNNVTSSAESESTGSGTSDTVTTDNANTTTND) are compositionally biased toward low complexity.

Belongs to the phi29likevirus proximal tail tube connector protein family.

The protein localises to the virion. Functionally, forms the proximal part of the tail tube. This Bacillus subtilis (Bacteriophage B103) protein is Proximal tail tube connector protein (11).